Consider the following 682-residue polypeptide: DNA-directed RNA polymerase subunit beta' (682 aa).

Positions 69, 71, 87, and 90 each coordinate Zn(2+). Mg(2+)-binding residues include D489, D491, and D493.

It belongs to the RNA polymerase beta' chain family. RpoC1 subfamily. In plastids the minimal PEP RNA polymerase catalytic core is composed of four subunits: alpha, beta, beta', and beta''. When a (nuclear-encoded) sigma factor is associated with the core the holoenzyme is formed, which can initiate transcription. Mg(2+) is required as a cofactor. Zn(2+) serves as cofactor.

Its subcellular location is the plastid. It is found in the chloroplast. It carries out the reaction RNA(n) + a ribonucleoside 5'-triphosphate = RNA(n+1) + diphosphate. Its function is as follows. DNA-dependent RNA polymerase catalyzes the transcription of DNA into RNA using the four ribonucleoside triphosphates as substrates. The sequence is that of DNA-directed RNA polymerase subunit beta' from Platanus occidentalis (Sycamore).